The chain runs to 372 residues: MIRQRAWVEIDQAALVHNVRQFRQYVGPKTNLMAVVKADAYGHGAVRVAQTALQAGADWLAIATLGEGIELREAGITAPILLLGGINSPEEIEAIAHWRLQPTLCSPEQAQLFNDILLKLGKVLPVHLKLDTGMTRLGTPWPQAANFVGLVQSLPQLRLASLYSHLATADDPNTATMLQQQERFAKAIASLRQARLPIPKLHLANSAATLHGQAWHYDMVRVGLGLYGLYPAPHLGDCLDLKPVLTVRAKITQIRTIPPGTGVSYGHQFVSEETMPMAVVGIGYADGVPRNLSNQLEVLLRGQPVRQIGAITMDQMMVDLRGIDDPQVGEVVTLIGQDGDRQITADHWASTLGTISWEILCGFKHRLPRILI.

Catalysis depends on Lys37, which acts as the Proton acceptor; specific for D-alanine. Residue Lys37 is modified to N6-(pyridoxal phosphate)lysine. Arg136 serves as a coordination point for substrate. Tyr265 serves as the catalytic Proton acceptor; specific for L-alanine. Met313 contributes to the substrate binding site.

Belongs to the alanine racemase family. Requires pyridoxal 5'-phosphate as cofactor.

The catalysed reaction is L-alanine = D-alanine. It functions in the pathway amino-acid biosynthesis; D-alanine biosynthesis; D-alanine from L-alanine: step 1/1. Catalyzes the interconversion of L-alanine and D-alanine. May also act on other amino acids. The polypeptide is Alanine racemase (alr) (Synechocystis sp. (strain ATCC 27184 / PCC 6803 / Kazusa)).